Reading from the N-terminus, the 261-residue chain is Methyl-coenzyme M reductase subunit gamma (261 aa).

Arg-123 provides a ligand contact to coenzyme M.

It belongs to the methyl-coenzyme M reductase gamma subunit family. As to quaternary structure, MCR is a hexamer of two alpha, two beta, and two gamma chains, forming a dimer of heterotrimers. Requires coenzyme F430 as cofactor.

The protein localises to the cytoplasm. It carries out the reaction coenzyme B + methyl-coenzyme M = methane + coenzyme M-coenzyme B heterodisulfide. Its pathway is one-carbon metabolism; methyl-coenzyme M reduction; methane from methyl-coenzyme M: step 1/1. Its function is as follows. Component of the methyl-coenzyme M reductase (MCR) I that catalyzes the reductive cleavage of methyl-coenzyme M (CoM-S-CH3 or 2-(methylthio)ethanesulfonate) using coenzyme B (CoB or 7-mercaptoheptanoylthreonine phosphate) as reductant which results in the production of methane and the mixed heterodisulfide of CoB and CoM (CoM-S-S-CoB). This is the final step in methanogenesis. This is Methyl-coenzyme M reductase subunit gamma (mcrG) from Methanococcus voltae.